Reading from the N-terminus, the 143-residue chain is Probable cyclic pyranopterin monophosphate synthase (143 aa).

Residues 61–63 (YCH) and 97–98 (ME) contribute to the substrate site. Aspartate 112 is a catalytic residue.

It belongs to the MoaC family. Homohexamer; trimer of dimers.

It carries out the reaction (8S)-3',8-cyclo-7,8-dihydroguanosine 5'-triphosphate = cyclic pyranopterin phosphate + diphosphate. The protein operates within cofactor biosynthesis; molybdopterin biosynthesis. Catalyzes the conversion of (8S)-3',8-cyclo-7,8-dihydroguanosine 5'-triphosphate to cyclic pyranopterin monophosphate (cPMP). In Thermoplasma acidophilum (strain ATCC 25905 / DSM 1728 / JCM 9062 / NBRC 15155 / AMRC-C165), this protein is Probable cyclic pyranopterin monophosphate synthase.